Consider the following 1271-residue polypeptide: Probable WRKY transcription factor protein 1 (1271 aa).

Polar residues predominate over residues 1 to 12 (MGAQYSTELNKY). Disordered stretches follow at residues 1–138 (MGAQ…NSDR), 204–312 (NNNN…QQNG), and 370–515 (NNNN…RTNS). Positions 9 to 71 (LNKYNNNNNN…NNNNNNNNNN (63 aa)) form a coiled coil. Composition is skewed to low complexity over residues 13 to 103 (NNNN…NNNN), 116 to 135 (INNT…NNNN), 204 to 216 (NNNN…NENN), and 223 to 259 (SSTT…NNNN). The segment covering 260–274 (NEDDEDDYGDDDTIE) has biased composition (acidic residues). Residues 297–312 (SNLNDTNGGNSPQQNG) show a composition bias toward polar residues. The stretch at 320–372 (KKLLALQQKQLEQEQEQKQQQKQQQQQQQQQQQQQQQQQQQQQKDAIENINNN) forms a coiled coil. Low complexity predominate over residues 370–388 (NNNNNNKLQPIVKNSVNKT). Residues 413-442 (NEDEYDASDEYIDDDDDDDEKYDDDDDEYF) show a composition bias toward acidic residues. Low complexity predominate over residues 443 to 458 (EGNNNNNYKKNNISNK). A compositionally biased stretch (basic and acidic residues) spans 475–487 (EIFKQKKLNHDKN). Residues 488-515 (QSNPKQQLTSHSEFDNSLLNKNQSRTNS) are compositionally biased toward polar residues. A coiled-coil region spans residues 520–574 (LQIKEENYHQIQQEHGEKQQQQQQQQQQPQQQQQQQQQQQQQQQQEMQVDKEQTE). Over residues 578–587 (NTNKKEEQKP) the composition is skewed to basic and acidic residues. 2 disordered regions span residues 578–650 (NTNK…EGFL) and 667–811 (SKKS…NISN). The segment covering 610-642 (NNENNNNNNNNNNNNNNNNNNNNNNNNNNYRNN) has biased composition (low complexity). Positions 672–702 (NVVPTSPKSNLSDQQPPFSPVQISPQKQSPA) are enriched in polar residues. Low complexity-rich tracts occupy residues 703–715 (TTTT…TPTP), 725–766 (NNNI…NNIN), and 774–811 (NSTQ…NISN). Residues 766–786 (NNEEDEENNSTQNNNNNNNNN) adopt a coiled-coil conformation. The segment at residues 808-872 (NISNIVSDGY…YKGEHCHGFP (65 aa)) is a DNA-binding region (WRKY 1). 4 residues coordinate Zn(2+): cysteine 839, cysteine 844, histidine 867, and histidine 869. The interval 890-1095 (FEGLDGNNNN…RFNGTSESKG (206 aa)) is disordered. Over residues 895 to 918 (GNNNNNNNNNNNNNNYSSNSNSNG) the composition is skewed to low complexity. Positions 919 to 937 (NGNGNGNGNGNGNGNGNGN) are enriched in gly residues. Over residues 938-956 (SNGNQDQNGNSFNDQNGDS) the composition is skewed to low complexity. The span at 957 to 966 (PTQHGQISPM) shows a compositional bias: polar residues. The segment covering 967 to 995 (NSPKNTIPTTTTTTTSISTYVNTNSTNKK) has biased composition (low complexity). Residues 998–1010 (SKQEKKISVKNET) are compositionally biased toward basic and acidic residues. Residues 1011–1021 (TDDDEFQEDID) show a composition bias toward acidic residues. Residues 1013-1040 (DDEFQEDIDQLSNNNNNNNNNNNNNNNN) adopt a coiled-coil conformation. Positions 1025 to 1085 (NNNNNNNNNN…NNNNNNNNNN (61 aa)) are enriched in low complexity. Positions 1105–1167 (SSIDHLDDGF…YRGKHNHDPP (63 aa)) form a DNA-binding region, WRKY 2. Zn(2+) contacts are provided by cysteine 1136, cysteine 1141, histidine 1162, and histidine 1164. Positions 1180–1210 (NGLYNNNNNNNNNNNNNNNNNNNNNNINNIN) are disordered. Positions 1184–1210 (NNNNNNNNNNNNNNNNNNNNNNINNIN) are enriched in low complexity.

It belongs to the WRKY group I family.

The protein resides in the nucleus. Functionally, probable transcription factor. Interacts specifically with the W box (5'-(T)TGAC[CT]-3'), a frequently occurring elicitor-responsive cis-acting element. In Dictyostelium discoideum (Social amoeba), this protein is Probable WRKY transcription factor protein 1 (wrky1).